A 236-amino-acid polypeptide reads, in one-letter code: Peroxisomal membrane protein PMP27 (236 aa).

The protein belongs to the peroxin-11 family. Homooligomer. Interacts with PEX34.

Its subcellular location is the peroxisome membrane. Involved in peroxisomal proliferation. Promotes peroxisome division and biogenesis. The protein is Peroxisomal membrane protein PMP27 (PEX11) of Saccharomyces cerevisiae (strain ATCC 204508 / S288c) (Baker's yeast).